Here is a 393-residue protein sequence, read N- to C-terminus: Riboflavin biosynthesis protein RibBA (393 aa).

Residues 1 to 200 (MQFDNIDSAL…IDDLIEYRKK (200 aa)) form a DHBP synthase region. D-ribulose 5-phosphate is bound by residues 27-28 (RE), D32, 139-143 (RNGHT), and E163. E28 is a binding site for Mg(2+). H142 lines the Mg(2+) pocket. The segment at 201–393 (LEPEIEFKAK…TKKIKMGHLI (193 aa)) is GTP cyclohydrolase II. Residue 249–253 (RLHSA) participates in GTP binding. Zn(2+)-binding residues include C254, C265, and C267. GTP contacts are provided by residues Q270, 291 to 293 (EGR), and T313. D325 (proton acceptor; for GTP cyclohydrolase activity) is an active-site residue. The active-site Nucleophile; for GTP cyclohydrolase activity is R327. GTP-binding residues include S348 and K353.

In the N-terminal section; belongs to the DHBP synthase family. The protein in the C-terminal section; belongs to the GTP cyclohydrolase II family. Mg(2+) is required as a cofactor. It depends on Mn(2+) as a cofactor. Requires Zn(2+) as cofactor.

The catalysed reaction is D-ribulose 5-phosphate = (2S)-2-hydroxy-3-oxobutyl phosphate + formate + H(+). The enzyme catalyses GTP + 4 H2O = 2,5-diamino-6-hydroxy-4-(5-phosphoribosylamino)-pyrimidine + formate + 2 phosphate + 3 H(+). It participates in cofactor biosynthesis; riboflavin biosynthesis; 2-hydroxy-3-oxobutyl phosphate from D-ribulose 5-phosphate: step 1/1. Its pathway is cofactor biosynthesis; riboflavin biosynthesis; 5-amino-6-(D-ribitylamino)uracil from GTP: step 1/4. In terms of biological role, catalyzes the conversion of D-ribulose 5-phosphate to formate and 3,4-dihydroxy-2-butanone 4-phosphate. Functionally, catalyzes the conversion of GTP to 2,5-diamino-6-ribosylamino-4(3H)-pyrimidinone 5'-phosphate (DARP), formate and pyrophosphate. This is Riboflavin biosynthesis protein RibBA from Staphylococcus aureus (strain MSSA476).